The sequence spans 1163 residues: Spike glycoprotein (1163 aa).

The N-terminal stretch at 1-18 (MLERSLLLATLLSALCSA) is a signal peptide. The Extracellular segment spans residues 19 to 1096 (NLFGNNSYVY…LKTYIKWPWY (1078 aa)). N-linked (GlcNAc...) asparagine; by host glycans are attached at residues Asn-23, Asn-51, Asn-74, Asn-102, Asn-139, Asn-145, Asn-164, Asn-179, Asn-213, Asn-238, Asn-248, Asn-265, Asn-272, Asn-277, Asn-307, Asn-426, Asn-448, Asn-514, Asn-531, Asn-543, Asn-580, Asn-592, Asn-670, and Asn-677. The heptad repeat 1 (HR1) stretch occupies residues 770 to 875 (IPFATQLQAR…QVDRIITGRL (106 aa)). A coiled-coil region spans residues 823 to 867 (QDVVNKQSSILTETMASLNKNFGAISSVLQDIYQQLDSIQADAQV). Residues Asn-948, Asn-961, Asn-980, Asn-1015, Asn-1039, Asn-1052, and Asn-1075 are each glycosylated (N-linked (GlcNAc...) asparagine; by host). Residues 1025–1106 (NDDFDFDDEL…VWLAIAFLTI (82 aa)) are heptad repeat 2 (HR2). Residues 1056 to 1084 (PILDIGSEIDRIQGVIQGLNDSLIDLETL) are a coiled coil. The helical transmembrane segment at 1097–1117 (VWLAIAFLTIIFILVLCWIFF) threads the bilayer. Over 1118–1163 (MTGCCGCCCGCFGIIPLMSKCGKKSSYYTTFDNDVVYEQYRPKKSV) the chain is Cytoplasmic. The Di-lysine motif signature appears at 1160-1163 (KKSV).

This sequence belongs to the gammacoronaviruses spike protein family. Homotrimer; each monomer consists of a S1 and a S2 subunit. The resulting peplomers protrude from the virus surface as spikes. Specific enzymatic cleavages in vivo yield mature proteins. The precursor is processed into S1 and S2 by host cell furin or furin-like protease to yield the mature S1 and S2 proteins. The cleavage site between S1 and S2 requires the optimal sequence [KR]-X-[KR]-R. Additionally, a second cleavage leads to the release of a fusion peptide after viral attachment to host cell receptor.

The protein resides in the virion membrane. Its subcellular location is the host endoplasmic reticulum-Golgi intermediate compartment membrane. Its function is as follows. Attaches the virion to the host cell membrane by interacting with sialic acids, initiating the infection. Functionally, mediates fusion of the virion and cellular membranes by acting as a class I viral fusion protein. Under the current model, the protein has at least 3 conformational states: pre-fusion native state, pre-hairpin intermediate state, and post-fusion hairpin state. During viral and target cell membrane fusion, the coiled coil regions (heptad repeats) assume a trimer-of-hairpins structure, positioning the fusion peptide in close proximity to the C-terminal region of the ectodomain. The formation of this structure appears to drive apposition and subsequent fusion of viral and target cell membranes. Acts as a viral fusion peptide after S2 cleavage occurring upon virus endocytosis. This Gallus gallus (Chicken) protein is Spike glycoprotein.